A 606-amino-acid chain; its full sequence is Urocanate reductase (606 aa).

A signal peptide (tat-type signal) is located at residues 1–40; the sequence is MSNLSRRNFITGGAIAALGGTLAIAGCAPKGESSSTVAGA. Position 111 is an FMN phosphoryl threonine (T111). FAD-binding residues include A163, E182, T191, G195, G196, A197, A305, and D373. R433 acts as the Proton donor in catalysis. E572 and I588 together coordinate FAD.

It belongs to the FAD-dependent oxidoreductase 2 family. FRD/SDH subfamily. Requires FAD as cofactor. It depends on FMN as a cofactor. In terms of processing, predicted to be exported by the Tat system. The position of the signal peptide cleavage has not been experimentally proven.

It carries out the reaction dihydrourocanate + A = urocanate + AH2. Catalyzes the two-electron reduction of urocanate to dihydrourocanate (also named imidazole propionate or deamino-histidine). Dihydrourocanate is present at higher concentrations in subjects with type 2 diabetes, and directly impairs glucose tolerance and insulin signaling at the level of insulin receptor substrate (IRS) through activation of p38 gamma (MAPK12)-p62-mTORC1. Therefore, the UrdA enzyme from the gut bacteria E.lenta strain DSM 2243 may contribute to the pathogenesis of type 2 diabetes by producing the microbial metabolite dihydrourocanate. The protein is Urocanate reductase of Eggerthella lenta (strain ATCC 25559 / DSM 2243 / CCUG 17323 / JCM 9979 / KCTC 3265 / NCTC 11813 / VPI 0255 / 1899 B) (Eubacterium lentum).